The following is a 621-amino-acid chain: Phytoene desaturase (621 aa).

The first 23 residues, M1 to A23, serve as a signal peptide directing secretion. The segment at H394–K425 is disordered. Polar residues predominate over residues Q397–P414. A helical membrane pass occupies residues W598–M618.

It belongs to the carotenoid/retinoid oxidoreductase family. NAD(+) serves as cofactor.

The protein localises to the membrane. The enzyme catalyses 15-cis-phytoene + 5 A = all-trans-3,4-didehydrolycopene + 5 AH2. It functions in the pathway carotenoid biosynthesis; lycopene biosynthesis. Its function is as follows. Phytoene desaturase involved in the carotenoid biosynthesis pathway. Converts phytoene into 3,4-didehydrolycopene via the intermediary of phytofluene, zeta-carotene, neurosporene and lycopene, by introducing up to five double bonds into phytoene. This is Phytoene desaturase (PDH1) from Cercospora nicotianae (Barn spot disease fungus).